The primary structure comprises 219 residues: Redox-sensing transcriptional repressor Rex (219 aa).

A DNA-binding region (H-T-H motif) is located at residues 18–57 (LYYRFIQSLYNSGKLRVSSAELSEAVKVDSATIRRDFSYF). 92–97 (GVGHLG) lines the NAD(+) pocket.

The protein belongs to the transcriptional regulatory Rex family. As to quaternary structure, homodimer.

It localises to the cytoplasm. Modulates transcription in response to changes in cellular NADH/NAD(+) redox state. The polypeptide is Redox-sensing transcriptional repressor Rex (Exiguobacterium sibiricum (strain DSM 17290 / CCUG 55495 / CIP 109462 / JCM 13490 / 255-15)).